The chain runs to 403 residues: Phosphoglycerate kinase (403 aa).

Residues 24–26 (DLN), Arg-39, 62–65 (HLGR), Arg-121, and Arg-161 contribute to the substrate site. ATP contacts are provided by residues Lys-211, Gly-299, Glu-330, and 359–362 (GGDS).

This sequence belongs to the phosphoglycerate kinase family. Monomer.

Its subcellular location is the cytoplasm. The enzyme catalyses (2R)-3-phosphoglycerate + ATP = (2R)-3-phospho-glyceroyl phosphate + ADP. The protein operates within carbohydrate degradation; glycolysis; pyruvate from D-glyceraldehyde 3-phosphate: step 2/5. The protein is Phosphoglycerate kinase of Corynebacterium jeikeium (strain K411).